We begin with the raw amino-acid sequence, 101 residues long: MIGLTHYLVVGAILFVTGIFGIFVNRKNVIVILMSIELMLLAVNINFVAFSTHLGDLAGQVFTMFVLTVAAAEAAIGLAILVVFFRNRGTIAVEDVNVMKG.

A run of 3 helical transmembrane segments spans residues 4–24 (LTHYLVVGAILFVTGIFGIFV), 30–50 (IVILMSIELMLLAVNINFVAF), and 65–85 (FVLTVAAAEAAIGLAILVVFF).

The protein belongs to the complex I subunit 4L family. In terms of assembly, NDH-1 is composed of at least 14 different subunits, Nqo1 to Nqo14. The complex has a L-shaped structure, with the hydrophobic arm (subunits Nqo7, Nqo8, Nqo10 to Nqo14) embedded in the inner membrane and the hydrophilic peripheral arm (subunits Nqo1 to Nqo6, Nqo9) protruding into the bacterial cytoplasm. The hydrophilic domain contains all the redox centers. NADH-quinone oxidoreductase forms a supercomplex with ubiquinol-cytochrome c reductase complex (complex III or cytochrome b-c1 complex) and cytochrome c oxidase (complex IV), which stabilizes the NADH-quinone oxidoreductase complex.

The protein resides in the cell inner membrane. It carries out the reaction a quinone + NADH + 5 H(+)(in) = a quinol + NAD(+) + 4 H(+)(out). In terms of biological role, NDH-1 shuttles electrons from NADH, via FMN and iron-sulfur (Fe-S) centers, to quinones in the respiratory chain. The immediate electron acceptor for the enzyme in this species is believed to be ubiquinone. Couples the redox reaction to proton translocation (for every two electrons transferred, four hydrogen ions are translocated across the cytoplasmic membrane), and thus conserves the redox energy in a proton gradient. This is NADH-quinone oxidoreductase subunit K (nuoK) from Paracoccus denitrificans (strain Pd 1222).